The following is a 269-amino-acid chain: uncharacterized protein (269 aa).

Residue Gln-15–His-41 coordinates NADP(+). Residue Ser-146 participates in substrate binding. Tyr-159 (proton acceptor) is an active-site residue.

It belongs to the short-chain dehydrogenases/reductases (SDR) family.

This is an uncharacterized protein from Escherichia coli O6:H1 (strain CFT073 / ATCC 700928 / UPEC).